Reading from the N-terminus, the 1098-residue chain is Early transcription factor large subunit homolog (1098 aa).

The Helicase ATP-binding domain occupies 17-317 (KGGRAFFPCD…PNGQPLQRQQ (301 aa)). An ATP-binding site is contributed by 64-71 (WQTGTGKS). The DEAH box motif lies at 246 to 249 (DEIH). Residues 489–689 (MMKDILSIIR…EGDKALRKHA (201 aa)) form the Helicase C-terminal domain.

This sequence belongs to the DEAD box helicase family. DEAH subfamily.

The protein localises to the virion. It catalyses the reaction ATP + H2O = ADP + phosphate + H(+). Functionally, putative initation factor. The polypeptide is Early transcription factor large subunit homolog (African swine fever virus (isolate Tick/Malawi/Lil 20-1/1983) (ASFV)).